The primary structure comprises 630 residues: A-type voltage-gated potassium channel KCND2 (630 aa).

Over 1–184 (MAAGVAAWLP…FENPHTSTMA (184 aa)) the chain is Cytoplasmic. An interaction with KCNIP1, KCNIP2, and other family members region spans residues 2 to 20 (AAGVAAWLPFARAAAIGWM). Residue Thr-38 is modified to Phosphothreonine. The interval 71–90 (ERDFFYHPETQQYFFDRDPD) is interaction with KCNIP1. Zn(2+) is bound by residues His-105, Cys-111, Cys-132, and Cys-133. A helical membrane pass occupies residues 185–206 (LVFYYVTGFFIAVSVIANVVET). Topologically, residues 207 to 226 (VPCGSSPGHIKELPCGERYA) are extracellular. Residues 227 to 249 (VAFFCLDTACVMIFTVEYLLRLA) traverse the membrane as a helical segment. Residues 250–256 (AAPSRYR) are Cytoplasmic-facing. Residues 257-281 (FVRSVMSIIDVVAILPYYIGLVMTD) traverse the membrane as a helical segment. The Extracellular portion of the chain corresponds to 282-287 (NEDVSG). Residues 288 to 307 (AFVTLRVFRVFRIFKFSRHS) traverse the membrane as a helical; Voltage-sensor segment. The Cytoplasmic portion of the chain corresponds to 308 to 321 (QGLRILGYTLKSCA). An S4-S5 linker region spans residues 308–321 (QGLRILGYTLKSCA). Residues 322–345 (SELGFLLFSLTMAIIIFATVMFYA) traverse the membrane as a helical segment. The Extracellular segment spans residues 346-357 (EKGSSASKFTSI). Residues 358 to 369 (PAAFWYTIVTMT) constitute an intramembrane region (helical). Residues Thr-370, Leu-371, Gly-372, and Tyr-373 each contribute to the K(+) site. The Selectivity filter signature appears at 370 to 375 (TLGYGD). The stretch at 370 to 377 (TLGYGDMV) is an intramembrane region. Over 378-380 (PKT) the chain is Extracellular. Residues 381–403 (IAGKIFGSICSLSGVLVIALPVP) traverse the membrane as a helical segment. Residues 404-630 (VIVSNFSRIY…GGNIVRVSAL (227 aa)) lie on the Cytoplasmic side of the membrane. At Ser-438 the chain carries Phosphoserine. Residues 474–489 (FETQHHHLLHCLEKTT) are required for dendritic targeting. Residues 474–630 (FETQHHHLLH…GGNIVRVSAL (157 aa)) are important for normal channel activation and inactivation, for interaction with KCNIP2, and probably other family members as well. Residues Ser-548, Ser-552, Ser-572, and Ser-575 each carry the phosphoserine modification. Positions 600–630 (IPTPPVTTPEGDDRPESPEYSGGNIVRVSAL) are disordered. Phosphothreonine occurs at positions 602 and 607. Position 616 is a phosphoserine (Ser-616). The short motif at 627-630 (VSAL) is the PDZ-binding element.

The protein belongs to the potassium channel family. D (Shal) (TC 1.A.1.2) subfamily. Kv4.2/KCND2 sub-subfamily. As to quaternary structure, homotetramer or heterotetramer with KCND1 or KCND3. Associates with the regulatory subunits KCNIP2, KCNIP3 and KCNIP4. Interacts with the regulatory subunit KCNIP1; this interaction mediates the capture of both the N- and C-terminus of KCND2, preventing N-type inactivation and stabilizing the S6 conformation, thereby accelerating closed state inactivation and recovery. In vivo, probably exists as heteromeric complex containing variable proportions of KCND1, KCND2, KCND3, KCNIP1, KCNIP2, KCNIP3, KCNIP4, DPP6 and DPP10. The tetrameric channel can associate with up to four regulatory subunits, such as KCNIP2 or KCNIP4. Interaction with four KCNIP4 chains does not reduce interaction with DPP10. Interacts with DLG4 and NCS1/FREQ. Interacts with DLG1. Probably part of a complex consisting of KCNIP1, KCNIP2 isoform 3 and KCND2. Interacts with FLNA, FLNC and DPP10. Interacts (via S1 and S2 helices) with DPP6; this interaction stabilizes the conformation of the S1-S2 helices and facilitates S4 conformational change, including S4 sliding up and down, thereby accelerating activation, inactivation, and recovery. In terms of processing, phosphorylation at Ser-438 in response to MAPK activation is increased in stimulated dendrites. Interaction with KCNIP2 and DPP6 propomtes phosphorylation by PKA at Ser-552. Phosphorylation at Ser-552 has no effect on interaction with KCNIP3, but is required for the regulation of channel activity by KCNIP3. Phosphorylation at Ser-552 leads to KCND2 internalization. Phosphorylated by MAPK in response to signaling via the metabotropic glutamate receptor GRM5. Phosphorylation at Ser-616 is required for the down-regulation of neuronal A-type currents in response to signaling via GRM5. In terms of tissue distribution, detected in ovary, in corpus luteum and in granulosa and theca cells in the follicle (at protein level). Highly expressed throughout the brain. Detected in amygdala, caudate nucleus, cerebellum, hippocampus, substantia nigra and thalamus. Expression is not detectable or very low in heart, kidney, liver, lung, pancreas and skeletal muscle. Not detectable in human heart atrium.

It is found in the cell membrane. The protein resides in the cell projection. Its subcellular location is the dendrite. The protein localises to the synapse. It localises to the perikaryon. It is found in the postsynaptic cell membrane. The protein resides in the dendritic spine. Its subcellular location is the cell junction. The catalysed reaction is K(+)(in) = K(+)(out). In terms of biological role, voltage-gated potassium channel that mediates transmembrane potassium transport in excitable membranes, primarily in the brain. Mediates the major part of the dendritic A-type current I(SA) in brain neurons. This current is activated at membrane potentials that are below the threshold for action potentials. It regulates neuronal excitability, prolongs the latency before the first spike in a series of action potentials, regulates the frequency of repetitive action potential firing, shortens the duration of action potentials and regulates the back-propagation of action potentials from the neuronal cell body to the dendrites. Contributes to the regulation of the circadian rhythm of action potential firing in suprachiasmatic nucleus neurons, which regulates the circadian rhythm of locomotor activity. Functions downstream of the metabotropic glutamate receptor GRM5 and plays a role in neuronal excitability and in nociception mediated by activation of GRM5. Mediates the transient outward current I(to) in rodent heart left ventricle apex cells, but not in human heart, where this current is mediated by another family member. Forms tetrameric potassium-selective channels through which potassium ions pass in accordance with their electrochemical gradient. The channel alternates between opened and closed conformations in response to the voltage difference across the membrane. Can form functional homotetrameric channels and heterotetrameric channels that contain variable proportions of KCND2 and KCND3; channel properties depend on the type of pore-forming alpha subunits that are part of the channel. In vivo, membranes probably contain a mixture of heteromeric potassium channel complexes. Interaction with specific isoforms of the regulatory subunits KCNIP1, KCNIP2, KCNIP3 or KCNIP4 strongly increases expression at the cell surface and thereby increases channel activity; it modulates the kinetics of channel activation and inactivation, shifts the threshold for channel activation to more negative voltage values, shifts the threshold for inactivation to less negative voltages and accelerates recovery after inactivation. Likewise, interaction with DPP6 or DPP10 promotes expression at the cell membrane and regulates both channel characteristics and activity. Upon depolarization, the channel goes from a resting closed state (C state) to an activated but non-conducting state (C* state), from there, the channel may either inactivate (I state) or open (O state). The polypeptide is A-type voltage-gated potassium channel KCND2 (Homo sapiens (Human)).